Reading from the N-terminus, the 507-residue chain is Glycerol kinase (507 aa).

T15 provides a ligand contact to ADP. 3 residues coordinate ATP: T15, T16, and S17. T15 contacts sn-glycerol 3-phosphate. R19 contacts ADP. Sn-glycerol 3-phosphate-binding residues include R85, E86, Y137, and D250. Residues R85, E86, Y137, D250, and Q251 each contribute to the glycerol site. ADP is bound by residues T272 and G316. Positions 272, 316, 320, and 417 each coordinate ATP. G417 is an ADP binding site.

It belongs to the FGGY kinase family.

The enzyme catalyses glycerol + ATP = sn-glycerol 3-phosphate + ADP + H(+). It participates in polyol metabolism; glycerol degradation via glycerol kinase pathway; sn-glycerol 3-phosphate from glycerol: step 1/1. Its activity is regulated as follows. Inhibited by fructose 1,6-bisphosphate (FBP). Functionally, key enzyme in the regulation of glycerol uptake and metabolism. Catalyzes the phosphorylation of glycerol to yield sn-glycerol 3-phosphate. This Mycoplasmopsis pulmonis (strain UAB CTIP) (Mycoplasma pulmonis) protein is Glycerol kinase.